Consider the following 210-residue polypeptide: Probable glutathione S-transferase gst-36 (210 aa).

The region spanning 2–79 is the GST N-terminal domain; the sequence is PHFKFYYFDV…YLGHQFHRAG (78 aa). Residues Tyr-8, Trp-39, Lys-43, 49-51, and 63-64 contribute to the glutathione site; these read GQV and QT. Residues 81-210 enclose the GST C-terminal domain; it reads NAVDCARLDM…YVSQRKATPA (130 aa).

The protein belongs to the GST superfamily. Sigma family.

It carries out the reaction RX + glutathione = an S-substituted glutathione + a halide anion + H(+). Its function is as follows. Conjugation of reduced glutathione to a wide number of exogenous and endogenous hydrophobic electrophiles. The chain is Probable glutathione S-transferase gst-36 (gst-36) from Caenorhabditis elegans.